The primary structure comprises 1817 residues: Breast cancer type 1 susceptibility protein homolog (1817 aa).

Met-1 is modified (N-acetylmethionine). An RING-type zinc finger spans residues 24–65 (CPICLELIKEPVSTQCDHIFCKFCMLKLLNQKKGPSQCPLCK). A Glycyl lysine isopeptide (Lys-Gly) (interchain with G-Cter in SUMO2) cross-link involves residue Lys-109. At Ser-114 the chain carries Phosphoserine. A Glycyl lysine isopeptide (Lys-Gly) (interchain with G-Cter in SUMO2) cross-link involves residue Lys-299. The tract at residues 305–346 (RSKQSGAAVSQQSRWADSKETCNGRPVPRTEGKADPNVDSLC) is disordered. Positions 308–319 (QSGAAVSQQSRW) are enriched in polar residues. Positions 320 to 340 (ADSKETCNGRPVPRTEGKADP) are enriched in basic and acidic residues. Residue Lys-337 forms a Glycyl lysine isopeptide (Lys-Gly) (interchain with G-Cter in SUMO2) linkage. The residue at position 393 (Ser-393) is a Phosphoserine. Lys-457 is covalently cross-linked (Glycyl lysine isopeptide (Lys-Gly) (interchain with G-Cter in SUMO2)). The Nuclear localization signal signature appears at 497 to 503 (KLKRKRS). Glycyl lysine isopeptide (Lys-Gly) (interchain with G-Cter in SUMO2) cross-links involve residues Lys-513 and Lys-578. A compositionally biased stretch (polar residues) spans 640-652 (SEETKKNNSNQTP). 4 disordered regions span residues 640–720 (SEET…SPER), 735–768 (NKEL…PDTD), 874–907 (LVGA…SEIS), and 959–982 (GISQ…TDNR). Over residues 669-679 (ADAKKNEPNEH) the composition is skewed to basic and acidic residues. Phosphoserine occurs at positions 686, 706, and 717. Low complexity predominate over residues 744-760 (GGEPSGKPTEPSEESTS). Residues 891–901 (SRGEQKERQGQ) are compositionally biased toward basic and acidic residues. The span at 959–976 (GISQNSHFRQSVSPLRSS) shows a compositional bias: polar residues. Position 975 is a phosphoserine; by CHEK2 (Ser-975). Lys-1049 is covalently cross-linked (Glycyl lysine isopeptide (Lys-Gly) (interchain with G-Cter in SUMO2)). Residues 1146 to 1185 (LRRESSRSPSPVTHASKSRSLHRGSRKLEFSEESDSTEDE) form a disordered region. Ser-1153 and Ser-1155 each carry phosphoserine. Positions 1161 to 1170 (SKSRSLHRGS) are enriched in basic residues. Over residues 1176–1185 (SEESDSTEDE) the composition is skewed to acidic residues. Phosphoserine occurs at positions 1181 and 1242. A disordered region spans residues 1259 to 1290 (SSQHSAALGSPANALSQDPDFNPPSKQRRHQA). Phosphoserine is present on residues Ser-1298, Ser-1304, and Ser-1344. Residue Thr-1351 is modified to Phosphothreonine. Residues 1354–1381 (RATMKDNLIKLQQEMAQLEAVLEQHGSQ) are interaction with PALB2. 2 disordered regions span residues 1375–1486 (LEQH…QEEL) and 1498–1534 (PHNL…DSES). 3 positions are modified to phosphoserine: Ser-1380, Ser-1414, and Ser-1482. Polar residues-rich tracts occupy residues 1405–1426 (NRSG…SQNP) and 1473–1485 (RSLQ…SQEE). BRCT domains are found at residues 1588–1682 (PKER…EFEV) and 1701–1800 (SQEK…AYLV).

Heterodimer with BARD1. Part of the BRCA1-associated genome surveillance complex (BASC), which contains BRCA1, MSH2, MSH6, MLH1, ATM, BLM, PMS2 and the MRE11-RAD50-NBN protein (MRN) complex. This association could be a dynamic process changing throughout the cell cycle and within subnuclear domains. Component of the BRCA1-A complex, at least composed of BRCA1, BARD1, UIMC1/RAP80, ABRAXAS1, BRCC3/BRCC36, BABAM2 and BABAM1/NBA1. Interacts (via the BRCT domains) with ABRAXAS1 (phosphorylated form); this is important for recruitment to sites of DNA damage. Can form a heterotetramer with two molecules of ABRAXAS1 (phosphorylated form). Component of the BRCA1-RBBP8 complex. Interacts (via the BRCT domains) with RBBP8 ('Ser-327' phosphorylated form); the interaction ubiquitinates RBBP8, regulates CHEK1 activation, and involves RBBP8 in BRCA1-dependent G2/M checkpoint control on DNA damage. Associates with RNA polymerase II holoenzyme. Interacts with SMC1A, NELFB, DCLRE1C, CLSPN. CHEK1, CHEK2, BAP1, BRCC3, UBXN1 and PCLAF. Interacts (via BRCT domains) with BRIP1 (phosphorylated form). Interacts with FANCD2 (ubiquitinated form). Interacts with H2AX (phosphorylated on 'Ser-140'). Interacts (via the BRCT domains) with ACACA (phosphorylated form); the interaction prevents dephosphorylation of ACACA. Part of a BRCA complex containing BRCA1, BRCA2 and PALB2. Interacts directly with PALB2; the interaction is essential for its function in HRR. Interacts directly with BRCA2; the interaction occurs only in the presence of PALB2 which serves as the bridging protein. Interacts (via the BRCT domains) with LMO4; the interaction represses the transcriptional activity of BRCA1. Interacts (via the BRCT domains) with CCAR2 (via N-terminus); the interaction represses the transcriptional activator activity of BRCA1. Interacts with EXD2. Interacts (via C-terminus) with DHX9; this interaction is direct and links BRCA1 to the RNA polymerase II holoenzyme. Interacts with DNA helicase ZGRF1; the interaction is increased following DNA damage induction. Post-translationally, phosphorylated in response to IR, UV, and various stimuli that cause checkpoint activation, probably by ATM or ATR. Phosphorylation at Ser-975 by CHEK2 regulates mitotic spindle assembly. Phosphorylation by AURKA regulates centrosomal microtubule nucleation. In terms of processing, autoubiquitinated, undergoes 'Lys-6'-linked polyubiquitination. 'Lys-6'-linked polyubiquitination does not promote degradation.

The protein localises to the nucleus. It is found in the chromosome. Its subcellular location is the cytoplasm. It catalyses the reaction S-ubiquitinyl-[E2 ubiquitin-conjugating enzyme]-L-cysteine + [acceptor protein]-L-lysine = [E2 ubiquitin-conjugating enzyme]-L-cysteine + N(6)-ubiquitinyl-[acceptor protein]-L-lysine.. It participates in protein modification; protein ubiquitination. In terms of biological role, E3 ubiquitin-protein ligase that specifically mediates the formation of 'Lys-6'-linked polyubiquitin chains and plays a central role in DNA repair by facilitating cellular responses to DNA damage. It is unclear whether it also mediates the formation of other types of polyubiquitin chains. The BRCA1-BARD1 heterodimer coordinates a diverse range of cellular pathways such as DNA damage repair, ubiquitination and transcriptional regulation to maintain genomic stability. Regulates centrosomal microtubule nucleation. Required for appropriate cell cycle arrests after ionizing irradiation in both the S-phase and the G2 phase of the cell cycle. Required for FANCD2 targeting to sites of DNA damage. Inhibits lipid synthesis by binding to inactive phosphorylated ACACA and preventing its dephosphorylation. Contributes to homologous recombination repair (HRR) via its direct interaction with PALB2, fine-tunes recombinational repair partly through its modulatory role in the PALB2-dependent loading of BRCA2-RAD51 repair machinery at DNA breaks. Component of the BRCA1-RBBP8 complex which regulates CHEK1 activation and controls cell cycle G2/M checkpoints on DNA damage via BRCA1-mediated ubiquitination of RBBP8. Acts as a transcriptional activator. The chain is Breast cancer type 1 susceptibility protein homolog (Brca1) from Rattus norvegicus (Rat).